Consider the following 445-residue polypeptide: POU domain, class 3, transcription factor 2 (445 aa).

Disordered stretches follow at residues Ala-64–Ala-173 and Leu-203–Ser-269. Residues His-67–Gly-90 show a composition bias toward gly residues. Composition is skewed to low complexity over residues Gln-125 to Gln-151 and His-163 to Ala-173. The segment covering Leu-217–His-226 has biased composition (basic and acidic residues). Basic residues predominate over residues Ala-227–Pro-237. Residues Gln-239–His-253 are compositionally biased toward pro residues. The 75-residue stretch at Glu-264–Asp-338 folds into the POU-specific domain. Ser-343 carries the phosphoserine modification. A DNA-binding region (homeobox) is located at residues Lys-356 to Thr-415. A disordered region spans residues Glu-411–Gln-445.

The protein belongs to the POU transcription factor family. Class-3 subfamily. In terms of assembly, interacts with PQBP1. Interaction with ISL1. As to expression, expressed specifically in the neuroectodermal cell lineage.

It is found in the nucleus. In terms of biological role, transcription factor that plays a key role in neuronal differentiation. Binds preferentially to the recognition sequence which consists of two distinct half-sites, ('GCAT') and ('TAAT'), separated by a non-conserved spacer region of 0, 2, or 3 nucleotides. Acts as a transcriptional activator when binding cooperatively with SOX4, SOX11, or SOX12 to gene promoters. The combination of three transcription factors, ASCL1, POU3F2/BRN2 and MYT1L, is sufficient to reprogram fibroblasts and other somatic cells into induced neuronal (iN) cells in vitro. Acts downstream of ASCL1, accessing chromatin that has been opened by ASCL1, and promotes transcription of neuronal genes. The chain is POU domain, class 3, transcription factor 2 (Pou3f2) from Mus musculus (Mouse).